The following is a 190-amino-acid chain: Jupiter microtubule associated homolog 2 (190 aa).

Met1 carries the N-acetylmethionine modification. The disordered stretch occupies residues 1–190 (MFQVPDSEGG…PGGKSSISFY (190 aa)). The residue at position 30 (Ser30) is a Phosphoserine. Thr35 carries the post-translational modification Phosphothreonine. A compositionally biased stretch (polar residues) spans 35–44 (TPSSRPNRMA). 3 positions are modified to phosphoserine: Ser45, Ser69, and Ser97. Over residues 110 to 129 (KPKDHVFLCEGEEPKSDLKA) the composition is skewed to basic and acidic residues. Phosphoserine is present on residues Ser132 and Ser144. Over residues 139-167 (PGEKGSARKAGPAKEQEPMPTVDSHEPRL) the composition is skewed to basic and acidic residues.

Belongs to the JUPITER family. As to quaternary structure, monomer. Dimer. Interacts with TPCN1. As to expression, expressed in liver, kidney, prostate, testis and uterus.

It localises to the cytoplasm. Its subcellular location is the nucleus. Its function is as follows. Nicotinic acid adenine dinucleotide phosphate (NAADP) binding protein required for NAADP-evoked intracellular calcium release. Confers NAADP-sensitivity to the two pore channels (TPCs) complex. Enables NAADP to activate Ca(2+) release from the endoplasmic reticulum through ryanodine receptors. In terms of biological role, (Microbial infection) Involved in the endolysosomal trafficking of human coronavirus SARS-CoV-2. The chain is Jupiter microtubule associated homolog 2 from Homo sapiens (Human).